Reading from the N-terminus, the 134-residue chain is Profilin (134 aa).

Belongs to the profilin family. In terms of assembly, occurs in many kinds of cells as a complex with monomeric actin in a 1:1 ratio.

It is found in the cytoplasm. The protein localises to the cytoskeleton. Its function is as follows. Binds to actin and affects the structure of the cytoskeleton. At high concentrations, profilin prevents the polymerization of actin, whereas it enhances it at low concentrations. By binding to PIP2, it inhibits the formation of IP3 and DG. The chain is Profilin from Daucus carota (Wild carrot).